We begin with the raw amino-acid sequence, 576 residues long: Septation ring formation regulator EzrA (576 aa).

Topologically, residues 1-7 (MSSTVII) are extracellular. Residues 8 to 26 (LIVVLLVILVAFYAFAILM) form a helical membrane-spanning segment. The Cytoplasmic portion of the chain corresponds to 27-576 (RKKTEDRILA…FKNKPTPDYL (550 aa)). 3 coiled-coil regions span residues 105-134 (RARE…VAQL), 254-305 (ENVN…FERE), and 356-402 (GYQE…IEKN).

Belongs to the EzrA family.

It localises to the cell membrane. Negative regulator of FtsZ ring formation; modulates the frequency and position of FtsZ ring formation. Inhibits FtsZ ring formation at polar sites. Interacts either with FtsZ or with one of its binding partners to promote depolymerization. This is Septation ring formation regulator EzrA from Lactococcus lactis subsp. cremoris (strain MG1363).